The following is a 268-amino-acid chain: Eukaryotic translation initiation factor 3 subunit J (268 aa).

2 disordered regions span residues 1 to 117 and 219 to 242; these read MTPS…DLKH and NEKM…KTKV. A compositionally biased stretch (acidic residues) spans 26-44; sequence DEEDEEVLDSWDAAEDSEV. Positions 40–95 form a coiled coil; it reads EDSEVEREKAAKAAEAKAKAEAEAAAKKKSKAQRIEEHKAERRKNAEADSEEDEDE. Composition is skewed to basic and acidic residues over residues 45–65 and 72–86; these read EREK…EAAA and QRIE…KNAE. Residues 87-99 show a composition bias toward acidic residues; the sequence is ADSEEDEDEDEDE. 2 stretches are compositionally biased toward basic and acidic residues: residues 100–117 and 220–232; these read AEKR…DLKH and EKMR…DKGS.

Belongs to the eIF-3 subunit J family. As to quaternary structure, component of the eukaryotic translation initiation factor 3 (eIF-3) complex.

It localises to the cytoplasm. Its function is as follows. Component of the eukaryotic translation initiation factor 3 (eIF-3) complex, which is involved in protein synthesis of a specialized repertoire of mRNAs and, together with other initiation factors, stimulates binding of mRNA and methionyl-tRNAi to the 40S ribosome. The eIF-3 complex specifically targets and initiates translation of a subset of mRNAs involved in cell proliferation. This chain is Eukaryotic translation initiation factor 3 subunit J (hcr1), found in Aspergillus clavatus (strain ATCC 1007 / CBS 513.65 / DSM 816 / NCTC 3887 / NRRL 1 / QM 1276 / 107).